The chain runs to 86 residues: Large ribosomal subunit protein bL27 (86 aa).

The tract at residues 1–21 (MAHHKGGGSSRNGKDSNPQYL) is disordered.

It belongs to the bacterial ribosomal protein bL27 family.

The sequence is that of Large ribosomal subunit protein bL27 from Coprothermobacter proteolyticus (strain ATCC 35245 / DSM 5265 / OCM 4 / BT).